Here is a 240-residue protein sequence, read N- to C-terminus: Phosphoribosyl isomerase A (240 aa).

The active-site Proton acceptor is D11. Catalysis depends on D130, which acts as the Proton donor.

This sequence belongs to the HisA/HisF family. Monomer.

It is found in the cytoplasm. It carries out the reaction 1-(5-phospho-beta-D-ribosyl)-5-[(5-phospho-beta-D-ribosylamino)methylideneamino]imidazole-4-carboxamide = 5-[(5-phospho-1-deoxy-D-ribulos-1-ylimino)methylamino]-1-(5-phospho-beta-D-ribosyl)imidazole-4-carboxamide. The enzyme catalyses N-(5-phospho-beta-D-ribosyl)anthranilate = 1-(2-carboxyphenylamino)-1-deoxy-D-ribulose 5-phosphate. It functions in the pathway amino-acid biosynthesis; L-histidine biosynthesis; L-histidine from 5-phospho-alpha-D-ribose 1-diphosphate: step 4/9. It participates in amino-acid biosynthesis; L-tryptophan biosynthesis; L-tryptophan from chorismate: step 3/5. Functionally, catalyzes the isomerization of the aminoaldose moiety of ProFAR to the aminoketose of PRFAR in the biosynthesis pathway for histidine and the isomerization of the aminoaldose PRA to the aminoketose CdRP in the biosynthsis pathway for tryptophan. The polypeptide is Phosphoribosyl isomerase A (priA) (Streptomyces coelicolor (strain ATCC BAA-471 / A3(2) / M145)).